Consider the following 129-residue polypeptide: Large-conductance mechanosensitive channel (129 aa).

A run of 3 helical transmembrane segments spans residues 8–28 (FIMR…AAFT), 30–50 (IVKS…AGAV), and 67–87 (GAVL…FLII).

It belongs to the MscL family. As to quaternary structure, homopentamer.

The protein localises to the cell membrane. Its function is as follows. Channel that opens in response to stretch forces in the membrane lipid bilayer. May participate in the regulation of osmotic pressure changes within the cell. In Oenococcus oeni (strain ATCC BAA-331 / PSU-1), this protein is Large-conductance mechanosensitive channel.